The chain runs to 251 residues: 2-amino-5-chloromuconate deaminase (251 aa).

In terms of assembly, monomer.

It catalyses the reaction (2Z,4E)-2-aminomuconate + H2O = (2Z,4E)-2-hydroxyhexa-2,4-dienedioate + NH4(+). It functions in the pathway xenobiotic degradation; 4-chloronitrobenzene degradation. The protein operates within xenobiotic degradation; nitrobenzene degradation. Its activity is regulated as follows. Cysteine residue modifying agents such as p-chloromercuribenzoate and the SH-binding metals Zn(2+), Ni(2+) and Cu(2+) completely inhibit deaminase activity, whereas Ca(2+), Mg(2+) and the histidine residue-modifying agent diethyl pyrocarbonate inhibit the activity by 23 to 50%. Involved in the biodegradation of xenobiotic compounds, such as nitrobenzene and 4-chloronitrobenzene (4-CNB). CnbZ preferentially catalyzes the deamination of 2-amino-5-chloromuconate (2A5CM) to yield 2-hydroxy-5-chloromuconate (2H5CM). Also able to catalyze the deamination of 2-aminomuconate to yield 2-hydroxymuconate, which spontaneously converts into its keto form, 2-oxalocrotonate. The protein is 2-amino-5-chloromuconate deaminase of Comamonas testosteroni (Pseudomonas testosteroni).